A 277-amino-acid chain; its full sequence is Shikimate dehydrogenase (NADP(+)) (277 aa).

Residues 15–17 (SLS) and T62 each bind shikimate. K66 functions as the Proton acceptor in the catalytic mechanism. Positions 87 and 102 each coordinate shikimate. NADP(+) is bound by residues 127 to 131 (GAGGA), 151 to 156 (NRTVDK), and I219. Residue Y221 participates in shikimate binding. G242 lines the NADP(+) pocket.

This sequence belongs to the shikimate dehydrogenase family. In terms of assembly, homodimer.

It catalyses the reaction shikimate + NADP(+) = 3-dehydroshikimate + NADPH + H(+). It functions in the pathway metabolic intermediate biosynthesis; chorismate biosynthesis; chorismate from D-erythrose 4-phosphate and phosphoenolpyruvate: step 4/7. In terms of biological role, involved in the biosynthesis of the chorismate, which leads to the biosynthesis of aromatic amino acids. Catalyzes the reversible NADPH linked reduction of 3-dehydroshikimate (DHSA) to yield shikimate (SA). The sequence is that of Shikimate dehydrogenase (NADP(+)) from Bacillus anthracis (strain CDC 684 / NRRL 3495).